A 286-amino-acid polypeptide reads, in one-letter code: NAD kinase (286 aa).

The active-site Proton acceptor is aspartate 74. NAD(+) contacts are provided by residues 74–75, 148–149, aspartate 178, alanine 186, 189–194, and glutamine 244; these read DG, ND, and TAYNLS.

Belongs to the NAD kinase family. The cofactor is a divalent metal cation.

Its subcellular location is the cytoplasm. The enzyme catalyses NAD(+) + ATP = ADP + NADP(+) + H(+). In terms of biological role, involved in the regulation of the intracellular balance of NAD and NADP, and is a key enzyme in the biosynthesis of NADP. Catalyzes specifically the phosphorylation on 2'-hydroxyl of the adenosine moiety of NAD to yield NADP. This Campylobacter jejuni (strain RM1221) protein is NAD kinase.